A 516-amino-acid chain; its full sequence is Putative thymidine phosphorylase (516 aa).

This sequence belongs to the thymidine/pyrimidine-nucleoside phosphorylase family. Type 2 subfamily.

The catalysed reaction is thymidine + phosphate = 2-deoxy-alpha-D-ribose 1-phosphate + thymine. The chain is Putative thymidine phosphorylase from Methylococcus capsulatus (strain ATCC 33009 / NCIMB 11132 / Bath).